We begin with the raw amino-acid sequence, 311 residues long: Mitochondrial arginine transporter BAC1 (311 aa).

Solcar repeat units lie at residues 12–101, 111–203, and 219–305; these read FGFY…AKLF, PRPE…LRYH, and VDMG…SMKM. The next 6 helical transmembrane spans lie at 18-38, 76-96, 113-133, 178-197, 222-242, and 288-308; these read YVAG…FDTV, GATS…GIYS, PEII…VLCP, GGSA…FTVY, GIGV…VLPF, and AFPA…MLGI.

It belongs to the mitochondrial carrier (TC 2.A.29) family. As to expression, high expression in flowers and siliques. Lower expression in leaves and stems.

Its subcellular location is the mitochondrion inner membrane. With respect to regulation, inhibited by mercuric chloride. In terms of biological role, mitochondrial arginine transporter that catalyzes the counter-exchange of arginine with lysine, ornithine, arginine and histidine. Substrate preference in reconstituted proteoliposomes is arginine &gt; lysine &gt; ornithine &gt; histidine. May be involved in the delivery of arginine, released from seed reserves, to mitochondrial arginase and the export of ornithine. The chain is Mitochondrial arginine transporter BAC1 (BAC1) from Arabidopsis thaliana (Mouse-ear cress).